The sequence spans 74 residues: M-myrmeciitoxin-Mb1a (74 aa).

Residues 1–26 form the signal peptide; it reads MKLSCLLLTLAIIVVLTIVHAPNVEA. The propeptide occupies 27-50; that stretch reads KALADPESDAVGFADAVGEADPNA. Glutamine 73 bears the Glutamine amide mark.

Belongs to the formicidae venom precursor-01 superfamily. Ant pilosulin family. As to expression, expressed by the venom gland.

It is found in the secreted. In terms of biological role, shows moderate activity against E.coli and S.aureus (MIC&lt;25 uM), slight activity against B.subtilis (MIC&lt;50 uM), and no activity against L.garvieae, P.aeruginosa, C.albicans, and S.cerevisiae. Has no hemolytic nor cytolytic activity. Causes an IgE-independent histamine release. This Myrmecia banksi (Jack jumper ant) protein is M-myrmeciitoxin-Mb1a.